Here is a 72-residue protein sequence, read N- to C-terminus: Translation initiation factor IF-1 (72 aa).

One can recognise an S1-like domain in the interval 1–72; that stretch reads MAKEDSIEMQ…SKGRIVFRAR (72 aa).

It belongs to the IF-1 family. In terms of assembly, component of the 30S ribosomal translation pre-initiation complex which assembles on the 30S ribosome in the order IF-2 and IF-3, IF-1 and N-formylmethionyl-tRNA(fMet); mRNA recruitment can occur at any time during PIC assembly.

Its subcellular location is the cytoplasm. One of the essential components for the initiation of protein synthesis. Stabilizes the binding of IF-2 and IF-3 on the 30S subunit to which N-formylmethionyl-tRNA(fMet) subsequently binds. Helps modulate mRNA selection, yielding the 30S pre-initiation complex (PIC). Upon addition of the 50S ribosomal subunit IF-1, IF-2 and IF-3 are released leaving the mature 70S translation initiation complex. The polypeptide is Translation initiation factor IF-1 (Psychromonas ingrahamii (strain DSM 17664 / CCUG 51855 / 37)).